The following is a 178-amino-acid chain: Adenine phosphoribosyltransferase (178 aa).

Belongs to the purine/pyrimidine phosphoribosyltransferase family. Homodimer.

The protein localises to the cytoplasm. It catalyses the reaction AMP + diphosphate = 5-phospho-alpha-D-ribose 1-diphosphate + adenine. The protein operates within purine metabolism; AMP biosynthesis via salvage pathway; AMP from adenine: step 1/1. In terms of biological role, catalyzes a salvage reaction resulting in the formation of AMP, that is energically less costly than de novo synthesis. This Cereibacter sphaeroides (strain ATCC 17025 / ATH 2.4.3) (Rhodobacter sphaeroides) protein is Adenine phosphoribosyltransferase.